Reading from the N-terminus, the 284-residue chain is MKVECASNIGFCFGVRRAINILEKTAAEKGGVETLGALVHNQQVLNRLSGMGVRVVKNIEDISGRTVAISSHGVGPLVLDELKSKGLEVVDTTCPFVKRAQVAAKRFHDAGFFTVIYGDVNHPEVKGIMGWAGGDGLATLNPQGLVDVPDVSRYIGVLSQTTQIPTGFTSFVKNVIDQALVKDAEIRIADTLCHDIRERQTAALELAGRVDLMLVIGGHNSANTRHLLDLCKTVSNTYLIETASELQTGWLRGVNRIGITSGASTDETTISEVCSYLGSLSAGT.

Cysteine 12 contacts [4Fe-4S] cluster. (2E)-4-hydroxy-3-methylbut-2-enyl diphosphate-binding residues include histidine 40 and histidine 72. Dimethylallyl diphosphate is bound by residues histidine 40 and histidine 72. 2 residues coordinate isopentenyl diphosphate: histidine 40 and histidine 72. Cysteine 94 serves as a coordination point for [4Fe-4S] cluster. Residue histidine 122 coordinates (2E)-4-hydroxy-3-methylbut-2-enyl diphosphate. Histidine 122 provides a ligand contact to dimethylallyl diphosphate. An isopentenyl diphosphate-binding site is contributed by histidine 122. Residue glutamate 124 is the Proton donor of the active site. Residue threonine 161 coordinates (2E)-4-hydroxy-3-methylbut-2-enyl diphosphate. Cysteine 193 serves as a coordination point for [4Fe-4S] cluster. Residues serine 221, asparagine 223, and serine 264 each contribute to the (2E)-4-hydroxy-3-methylbut-2-enyl diphosphate site. Serine 221, asparagine 223, and serine 264 together coordinate dimethylallyl diphosphate. Isopentenyl diphosphate contacts are provided by serine 221, asparagine 223, and serine 264.

The protein belongs to the IspH family. [4Fe-4S] cluster is required as a cofactor.

It carries out the reaction isopentenyl diphosphate + 2 oxidized [2Fe-2S]-[ferredoxin] + H2O = (2E)-4-hydroxy-3-methylbut-2-enyl diphosphate + 2 reduced [2Fe-2S]-[ferredoxin] + 2 H(+). The enzyme catalyses dimethylallyl diphosphate + 2 oxidized [2Fe-2S]-[ferredoxin] + H2O = (2E)-4-hydroxy-3-methylbut-2-enyl diphosphate + 2 reduced [2Fe-2S]-[ferredoxin] + 2 H(+). It functions in the pathway isoprenoid biosynthesis; dimethylallyl diphosphate biosynthesis; dimethylallyl diphosphate from (2E)-4-hydroxy-3-methylbutenyl diphosphate: step 1/1. Its pathway is isoprenoid biosynthesis; isopentenyl diphosphate biosynthesis via DXP pathway; isopentenyl diphosphate from 1-deoxy-D-xylulose 5-phosphate: step 6/6. Functionally, catalyzes the conversion of 1-hydroxy-2-methyl-2-(E)-butenyl 4-diphosphate (HMBPP) into a mixture of isopentenyl diphosphate (IPP) and dimethylallyl diphosphate (DMAPP). Acts in the terminal step of the DOXP/MEP pathway for isoprenoid precursor biosynthesis. The sequence is that of 4-hydroxy-3-methylbut-2-enyl diphosphate reductase from Dehalococcoides mccartyi (strain ATCC BAA-2266 / KCTC 15142 / 195) (Dehalococcoides ethenogenes (strain 195)).